The chain runs to 122 residues: Large ribosomal subunit protein uL22 (122 aa).

This sequence belongs to the universal ribosomal protein uL22 family. Part of the 50S ribosomal subunit.

Its function is as follows. This protein binds specifically to 23S rRNA; its binding is stimulated by other ribosomal proteins, e.g. L4, L17, and L20. It is important during the early stages of 50S assembly. It makes multiple contacts with different domains of the 23S rRNA in the assembled 50S subunit and ribosome. In terms of biological role, the globular domain of the protein is located near the polypeptide exit tunnel on the outside of the subunit, while an extended beta-hairpin is found that lines the wall of the exit tunnel in the center of the 70S ribosome. The sequence is that of Large ribosomal subunit protein uL22 from Caldicellulosiruptor saccharolyticus (strain ATCC 43494 / DSM 8903 / Tp8T 6331).